We begin with the raw amino-acid sequence, 277 residues long: Pantothenate synthetase (277 aa).

26 to 33 (MGNLHAGH) serves as a coordination point for ATP. The Proton donor role is filled by His33. Residue Gln57 participates in (R)-pantoate binding. Gln57 is a beta-alanine binding site. 143–146 (GEKD) lines the ATP pocket. Residue Gln149 participates in (R)-pantoate binding. ATP contacts are provided by residues Val172 and 180–183 (LSSR).

This sequence belongs to the pantothenate synthetase family. As to quaternary structure, homodimer.

It localises to the cytoplasm. It carries out the reaction (R)-pantoate + beta-alanine + ATP = (R)-pantothenate + AMP + diphosphate + H(+). It functions in the pathway cofactor biosynthesis; (R)-pantothenate biosynthesis; (R)-pantothenate from (R)-pantoate and beta-alanine: step 1/1. Functionally, catalyzes the condensation of pantoate with beta-alanine in an ATP-dependent reaction via a pantoyl-adenylate intermediate. This is Pantothenate synthetase from Nitrosomonas europaea (strain ATCC 19718 / CIP 103999 / KCTC 2705 / NBRC 14298).